Reading from the N-terminus, the 456-residue chain is Alcohol acyltransferase 1 (456 aa).

Residues H166 and D382 each act as proton acceptor in the active site.

It belongs to the plant acyltransferase family. Expressed in fruit.

The enzyme catalyses 3-(methylsulfanyl)propanoyl-CoA + butan-1-ol = butyl 3-(methylsulfanyl)propanoate + CoA. The catalysed reaction is ethanol + benzoyl-CoA = ethyl benzoate + CoA. It carries out the reaction butan-1-ol + benzoyl-CoA = butyl benzoate + CoA. It catalyses the reaction 2-(methylsulfanyl)acetyl-CoA + butan-1-ol = butyl 2-(methylsulfanyl)acetate + CoA. In terms of biological role, involved in the biosynthesis of volatile esters which confer kiwifruit flavor. Alcohol acyl transferase that can use a wide range of alcohols as substrate to produce esters. Exhibits benzoyl-CoA:alcohol O-acyltransferase activity. This chain is Alcohol acyltransferase 1, found in Actinidia deliciosa (Kiwi).